A 156-amino-acid chain; its full sequence is 6,7-dimethyl-8-ribityllumazine synthase (156 aa).

Residues F23, 57–59, and 81–83 each bind 5-amino-6-(D-ribitylamino)uracil; these read AYE and AII. Position 86 to 87 (86 to 87) interacts with (2S)-2-hydroxy-3-oxobutyl phosphate; that stretch reads ST. The active-site Proton donor is the H89. Position 114 (F114) interacts with 5-amino-6-(D-ribitylamino)uracil. (2S)-2-hydroxy-3-oxobutyl phosphate is bound at residue R128.

It belongs to the DMRL synthase family.

The enzyme catalyses (2S)-2-hydroxy-3-oxobutyl phosphate + 5-amino-6-(D-ribitylamino)uracil = 6,7-dimethyl-8-(1-D-ribityl)lumazine + phosphate + 2 H2O + H(+). Its pathway is cofactor biosynthesis; riboflavin biosynthesis; riboflavin from 2-hydroxy-3-oxobutyl phosphate and 5-amino-6-(D-ribitylamino)uracil: step 1/2. In terms of biological role, catalyzes the formation of 6,7-dimethyl-8-ribityllumazine by condensation of 5-amino-6-(D-ribitylamino)uracil with 3,4-dihydroxy-2-butanone 4-phosphate. This is the penultimate step in the biosynthesis of riboflavin. The polypeptide is 6,7-dimethyl-8-ribityllumazine synthase (Campylobacter hominis (strain ATCC BAA-381 / DSM 21671 / CCUG 45161 / LMG 19568 / NCTC 13146 / CH001A)).